Consider the following 298-residue polypeptide: Mitochondrial distribution and morphology protein 12 (298 aa).

The region spanning 1–298 (MSIELDWTGL…VYPHFYTLYL (298 aa)) is the SMP-LTD domain. The interval 118–142 (SEHEESLSRWSDTESETGTCDSSSL) is disordered. Positions 133 to 142 (ETGTCDSSSL) are enriched in polar residues.

This sequence belongs to the MDM12 family. As to quaternary structure, component of the ER-mitochondria encounter structure (ERMES) or MDM complex, composed of MMM1, MDM10, MDM12 and MDM34. An MMM1 homodimer associates with one molecule of MDM12 on each side in a pairwise head-to-tail manner, and the SMP-LTD domains of MMM1 and MDM12 generate a continuous hydrophobic tunnel for phospholipid trafficking.

The protein localises to the mitochondrion outer membrane. Its subcellular location is the endoplasmic reticulum membrane. Component of the ERMES/MDM complex, which serves as a molecular tether to connect the endoplasmic reticulum (ER) and mitochondria. Components of this complex are involved in the control of mitochondrial shape and protein biogenesis, and function in nonvesicular lipid trafficking between the ER and mitochondria. MDM12 is required for the interaction of the ER-resident membrane protein MMM1 and the outer mitochondrial membrane-resident beta-barrel protein MDM10. The MDM12-MMM1 subcomplex functions in the major beta-barrel assembly pathway that is responsible for biogenesis of all mitochondrial outer membrane beta-barrel proteins, and acts in a late step after the SAM complex. The MDM10-MDM12-MMM1 subcomplex further acts in the TOM40-specific pathway after the action of the MDM12-MMM1 complex. Essential for establishing and maintaining the structure of mitochondria and maintenance of mtDNA nucleoids. In Malassezia globosa (strain ATCC MYA-4612 / CBS 7966) (Dandruff-associated fungus), this protein is Mitochondrial distribution and morphology protein 12.